The following is a 212-amino-acid chain: Thymidylate kinase (212 aa).

Gly7–Ser14 is an ATP binding site.

This sequence belongs to the thymidylate kinase family.

The enzyme catalyses dTMP + ATP = dTDP + ADP. In terms of biological role, phosphorylation of dTMP to form dTDP in both de novo and salvage pathways of dTTP synthesis. The sequence is that of Thymidylate kinase from Trichlorobacter lovleyi (strain ATCC BAA-1151 / DSM 17278 / SZ) (Geobacter lovleyi).